A 240-amino-acid chain; its full sequence is MGKTQSLPILITGGGRRIGLALAWHFINQKQPVIVSYRTHYPAIDGLIKAGAQCIQADFSTNDGVMAFADEVLKSTHGLRAILHNASAWMAEKPGAPLTDVLACMMQIHVNTPYLLNHALERLLRGHGHAASDIIHFTDYVVERGSDKHIAYAASKAALDNMTRSFARKLAPEVKVNSIAPSLILFNEHDDAEYRQQALNKSLMKTAPGEKEVIDLVDYLLTSCFVTGRSLPLDGGRHLR.

Tyr152 (proton acceptor) is an active-site residue.

The protein belongs to the short-chain dehydrogenases/reductases (SDR) family. FolM subfamily.

The catalysed reaction is (6S)-5,6,7,8-tetrahydrofolate + NADP(+) = 7,8-dihydrofolate + NADPH + H(+). It carries out the reaction 7,8-dihydromonapterin + NADPH + H(+) = 5,6,7,8-tetrahydromonapterin + NADP(+). Its function is as follows. Catalyzes the reduction of dihydromonapterin to tetrahydromonapterin. Also has lower activity with dihydrofolate. The sequence is that of Dihydromonapterin reductase (folM) from Escherichia coli O6:H1 (strain CFT073 / ATCC 700928 / UPEC).